The following is a 522-amino-acid chain: Protein RCC2 (522 aa).

Residues 1–83 (MPRKKAAAAA…TAGKAGGAAV (83 aa)) are disordered. Serine 16 bears the Phosphoserine mark. Threonine 20 carries the phosphothreonine modification. The span at 24-36 (GPRKRGGPAGRKR) shows a compositional bias: basic residues. Residues serine 43, serine 44, serine 45, serine 46, serine 50, and serine 51 each carry the phosphoserine modification. Over residues 71–82 (RPATAGKAGGAA) the composition is skewed to low complexity. An N6-acetyllysine mark is found at lysine 92 and lysine 124. RCC1 repeat units lie at residues 103 to 165 (KGQL…SLLI), 168 to 219 (EGKL…ALTE), 221 to 271 (GSVF…IMDC), 273 to 347 (GNLY…VLDS), 348 to 401 (QKRV…AVSE), 403 to 447 (GGLF…VAAD), and 448 to 501 (ESTI…VIAR). Lysine 293 carries the N6-acetyllysine modification. The required for interaction with RAC1 stretch occupies residues 318–325 (KTKDGQIL). Threonine 342 is subject to Phosphothreonine. Position 377 is an N6-acetyllysine (lysine 377). Residues 502 to 515 (DESETEKEKIKKLP) are compositionally biased toward basic and acidic residues. Residues 502 to 522 (DESETEKEKIKKLPEYNPRTL) form a disordered region.

As to quaternary structure, interacts with RAC1. Interacts with nucleotide-free and with GDP and GTP-bound forms of RAC1, with a slight preference for GDP-bound RAC1. Binds preferentially to the nucleotide-free form of RAC1. Interacts with CORO1C. Interacts with microtubules.

Its subcellular location is the nucleus. The protein localises to the nucleolus. The protein resides in the cytoplasm. It localises to the cytoskeleton. It is found in the chromosome. Its subcellular location is the centromere. The protein localises to the spindle. The protein resides in the midbody. It localises to the cell membrane. In terms of biological role, multifunctional protein that may affect its functions by regulating the activity of small GTPases, such as RAC1 and RALA. Required for normal progress through the cell cycle, both during interphase and during mitosis. Required for the presence of normal levels of MAD2L1, AURKB and BIRC5 on inner centromeres during mitosis, and for normal attachment of kinetochores to mitotic spindles. Required for normal organization of the microtubule cytoskeleton in interphase cells. Functions as guanine nucleotide exchange factor (GEF) for RALA. Interferes with the activation of RAC1 by guanine nucleotide exchange factors. Prevents accumulation of active, GTP-bound RAC1, and suppresses RAC1-mediated reorganization of the actin cytoskeleton and formation of membrane protrusions. Required for normal cellular responses to contacts with the extracellular matrix of adjacent cells, and for directional cell migration in response to a fibronectin gradient (in vitro). The chain is Protein RCC2 (RCC2) from Homo sapiens (Human).